The chain runs to 423 residues: tRNA-dihydrouridine(16/17) synthase [NAD(P)(+)] (423 aa).

An N-acetylthreonine modification is found at Thr2. Residues 35–37 (PMV) and Gln92 contribute to the FMN site. Cys121 (proton donor) is an active-site residue. FMN is bound by residues Lys160, His188, 223-225 (NGN), and 247-248 (AE). Positions 404–423 (KKRKADVPLESADKKKDVKA) are disordered. Residues 408-423 (ADVPLESADKKKDVKA) are compositionally biased toward basic and acidic residues.

The protein belongs to the Dus family. Dus1 subfamily. Monomer. Requires FMN as cofactor.

The catalysed reaction is 5,6-dihydrouridine(16) in tRNA + NADP(+) = uridine(16) in tRNA + NADPH + H(+). It catalyses the reaction 5,6-dihydrouridine(16) in tRNA + NAD(+) = uridine(16) in tRNA + NADH + H(+). It carries out the reaction 5,6-dihydrouridine(17) in tRNA + NAD(+) = uridine(17) in tRNA + NADH + H(+). The enzyme catalyses 5,6-dihydrouridine(17) in tRNA + NADP(+) = uridine(17) in tRNA + NADPH + H(+). The catalysed reaction is a 5,6-dihydrouridine in mRNA + NAD(+) = a uridine in mRNA + NADH + H(+). It catalyses the reaction a 5,6-dihydrouridine in mRNA + NADP(+) = a uridine in mRNA + NADPH + H(+). Its function is as follows. Catalyzes the synthesis of dihydrouridine, a modified base found in the D-loop of most tRNAs. Specifically modifies U16 and U17 in cytoplasmic tRNAs. Also able to mediate dihydrouridylation of some mRNAs, thereby affecting their translation. This chain is tRNA-dihydrouridine(16/17) synthase [NAD(P)(+)], found in Saccharomyces cerevisiae (strain ATCC 204508 / S288c) (Baker's yeast).